A 155-amino-acid polypeptide reads, in one-letter code: Ribosomal RNA large subunit methyltransferase H (155 aa).

S-adenosyl-L-methionine-binding positions include Leu72, Gly103, and 122-127; that span reads LSALTL.

Belongs to the RNA methyltransferase RlmH family. As to quaternary structure, homodimer.

The protein localises to the cytoplasm. The enzyme catalyses pseudouridine(1915) in 23S rRNA + S-adenosyl-L-methionine = N(3)-methylpseudouridine(1915) in 23S rRNA + S-adenosyl-L-homocysteine + H(+). In terms of biological role, specifically methylates the pseudouridine at position 1915 (m3Psi1915) in 23S rRNA. This is Ribosomal RNA large subunit methyltransferase H from Shigella boydii serotype 18 (strain CDC 3083-94 / BS512).